A 932-amino-acid chain; its full sequence is DNA mismatch repair protein MutS (932 aa).

615-622 (GPNMAGKS) contributes to the ATP binding site.

This sequence belongs to the DNA mismatch repair MutS family.

Functionally, this protein is involved in the repair of mismatches in DNA. It is possible that it carries out the mismatch recognition step. This protein has a weak ATPase activity. In Clostridium botulinum (strain Hall / ATCC 3502 / NCTC 13319 / Type A), this protein is DNA mismatch repair protein MutS.